We begin with the raw amino-acid sequence, 614 residues long: Zinc metalloproteinase-disintegrin-like protein H4 subunit A (614 aa).

A signal peptide spans 1-20 (MIQPLLVVTCLVVFPYQVSS). Positions 21–193 (IILESGNVND…RKASQLVATS (173 aa)) are excised as a propeptide. At Glu194 the chain carries Pyrrolidone carboxylic acid (Glu). The 197-residue stretch at 201-397 (KYIELVIVVD…IKSKCIDNKP (197 aa)) folds into the Peptidase M12B domain. Asn220 carries N-linked (GlcNAc...) asparagine glycosylation. 17 cysteine pairs are disulfide-bonded: Cys312/Cys392, Cys352/Cys376, Cys354/Cys359, Cys408/Cys437, Cys419/Cys432, Cys421/Cys427, Cys431/Cys454, Cys445/Cys451, Cys450/Cys476, Cys463/Cys483, Cys470/Cys502, Cys495/Cys507, Cys514/Cys564, Cys529/Cys575, Cys542/Cys552, Cys559/Cys601, and Cys595/Cys607. Residue His337 participates in Zn(2+) binding. Residues 337 to 348 (HELGHNLGMDHD) carry the Metal-binding motif. The active-site Proton acceptor is the Glu338. Positions 341 and 347 each coordinate Zn(2+). The 87-residue stretch at 405–491 (PAFCGNYFVE…ECPTDVLQRN (87 aa)) folds into the Disintegrin domain. Ca(2+) is bound by residues Asn410, Phe412, Glu414, Glu417, and Asp420. Asn433 carries N-linked (GlcNAc...) asparagine glycosylation. The D/ECD-tripeptide signature appears at 469 to 471 (ECD). Ca(2+) contacts are provided by Asp471 and Asp486.

This sequence belongs to the venom metalloproteinase (M12B) family. P-III subfamily. As to quaternary structure, homodimer; disulfide-linked. Heterodimer of A and B subunits; disulfide-linked. It depends on Zn(2+) as a cofactor. Post-translationally, N-glycosylated. In terms of processing, the N-terminus is blocked. In terms of tissue distribution, expressed by the venom gland (at protein level). Expressed by the venom gland.

Its subcellular location is the secreted. Its activity is regulated as follows. The proteolytic activity of the heterodimer of A and B subunits requires Zn(2+) and Ca(2+) ions. In terms of biological role, heterodimer (A and B subunits): Zinc metalloprotease that has fibrinogenolytic and hemorrhagic activities. Cleaves insulin B chain preferably at '40-Tyr-|-Leu-41' bond, but also at '28-Gln-|-His-29' and '34-His-|-Leu-35' bonds. Hydrolyzes effectively isolated extracellular matrix (ECM) bovine fibronectin, and only slightly, basal membrane (BM) proteins human collagen IV and murine laminin, in vitro. Cleaves nidogen-1 (at '350-Ser-|-Phe-351' and '380-Tyr-|-Asn-381' bonds), but not laminin, in a solubilized BM preparation. Hydrolyzes plasma proteins involved in blood coagulation in vitro. It slightly shortens prothrombin time and significantly prolongs thrombin time. Has potent alpha-fibrinogenase activity cleaving human fibrinogen alpha chain at '441-Glu-|-Leu-442' and '539-Glu-|-Phe-540' bonds, and to a lesser extent, beta chain at '52-Lys-|-Arg-53' and '48-Pro-|-Leu-49' bonds, but does not cleave gamma chain. Hydrolyzes bovine prothrombin at '200-Ser-|-Gly-201' bond, but does not activate it, however, it cleaves fragment 1 and prethrombin 1 from it. Hydrolyzes bovine factor X heavy chain, but the cleavage does not produce an activated factor Xa heavy chain. No hydrolysis or activation of plasminogen. The ability to degrade some of the ECM, BM and plasma proteins is likely the main contributor to its hemorrhagic activity. Inhibits platelet aggregation induced by collagen in vitro. Its binding to glycosaminoglycans (GAGs) may assist in concentrating it in the proximity of blood vessel walls enabling in vivo degradation of BM protein components. Cytotoxic to cultured HeLa cancer cells in a concentration- and time-dependent manner. In the solubilized BM preparation (Matrigel), it induces morphological changes in the HeLa cells and inhibits their adhesion, however, the viability of the cells is not reduced. The sequence is that of Zinc metalloproteinase-disintegrin-like protein H4 subunit A from Vipera ammodytes ammodytes (Western sand viper).